Here is a 210-residue protein sequence, read N- to C-terminus: ATP phosphoribosyltransferase (210 aa).

The protein belongs to the ATP phosphoribosyltransferase family. Short subfamily. Heteromultimer composed of HisG and HisZ subunits.

The protein localises to the cytoplasm. The catalysed reaction is 1-(5-phospho-beta-D-ribosyl)-ATP + diphosphate = 5-phospho-alpha-D-ribose 1-diphosphate + ATP. Its pathway is amino-acid biosynthesis; L-histidine biosynthesis; L-histidine from 5-phospho-alpha-D-ribose 1-diphosphate: step 1/9. In terms of biological role, catalyzes the condensation of ATP and 5-phosphoribose 1-diphosphate to form N'-(5'-phosphoribosyl)-ATP (PR-ATP). Has a crucial role in the pathway because the rate of histidine biosynthesis seems to be controlled primarily by regulation of HisG enzymatic activity. The protein is ATP phosphoribosyltransferase of Bacillus cytotoxicus (strain DSM 22905 / CIP 110041 / 391-98 / NVH 391-98).